A 297-amino-acid polypeptide reads, in one-letter code: Eukaryotic translation initiation factor 3 subunit G (297 aa).

The span at 1-10 (MAAVQQKHDW) shows a compositional bias: basic and acidic residues. The segment at 1–35 (MAAVQQKHDWADDDELEETSTELPPPQKITNKDGS) is disordered. The span at 11–20 (ADDDELEETS) shows a compositional bias: acidic residues. In terms of domain architecture, RRM spans 217-295 (ATLRVTNVSE…LILRVEFAKK (79 aa)).

The protein belongs to the eIF-3 subunit G family. As to quaternary structure, component of the eukaryotic translation initiation factor 3 (eIF-3) complex.

Its subcellular location is the cytoplasm. RNA-binding component of the eukaryotic translation initiation factor 3 (eIF-3) complex, which is involved in protein synthesis of a specialized repertoire of mRNAs and, together with other initiation factors, stimulates binding of mRNA and methionyl-tRNAi to the 40S ribosome. The eIF-3 complex specifically targets and initiates translation of a subset of mRNAs involved in cell proliferation. This subunit can bind 18S rRNA. This chain is Eukaryotic translation initiation factor 3 subunit G (eif3g), found in Neurospora crassa (strain ATCC 24698 / 74-OR23-1A / CBS 708.71 / DSM 1257 / FGSC 987).